The primary structure comprises 267 residues: Pyrroline-5-carboxylate reductase (267 aa).

It belongs to the pyrroline-5-carboxylate reductase family.

Its subcellular location is the cytoplasm. The catalysed reaction is L-proline + NADP(+) = (S)-1-pyrroline-5-carboxylate + NADPH + 2 H(+). The enzyme catalyses L-proline + NAD(+) = (S)-1-pyrroline-5-carboxylate + NADH + 2 H(+). It functions in the pathway amino-acid biosynthesis; L-proline biosynthesis; L-proline from L-glutamate 5-semialdehyde: step 1/1. In terms of biological role, catalyzes the reduction of 1-pyrroline-5-carboxylate (PCA) to L-proline. The polypeptide is Pyrroline-5-carboxylate reductase (Synechocystis sp. (strain ATCC 27184 / PCC 6803 / Kazusa)).